The sequence spans 201 residues: Recombination protein RecR (201 aa).

Residues 60 to 75 (CSCCGNVDTIDPCTVC) form a C4-type zinc finger. The Toprim domain occupies 83–178 (AVIIVVEDVA…RITRLAHGVP (96 aa)).

This sequence belongs to the RecR family.

Functionally, may play a role in DNA repair. It seems to be involved in an RecBC-independent recombinational process of DNA repair. It may act with RecF and RecO. In Rhizobium meliloti (strain 1021) (Ensifer meliloti), this protein is Recombination protein RecR.